The sequence spans 730 residues: Protein groucho (730 aa).

The disordered stretch occupies residues 144–411; that stretch reads QVPGGPPQPM…GKPAYSFHMN (268 aa). Basic and acidic residues predominate over residues 198 to 233; it reads AEERLRNSVSPADREKYRTRSPLDIENDSKRRKDEK. A phosphoserine mark is found at Ser205, Ser207, and Ser218. The CCN domain stretch occupies residues 206-267; the sequence is VSPADREKYR…SPRPNGEHVS (62 aa). The short motif at 227–230 is the Nuclear localization signal element; that stretch reads KRRK. Ser242 is modified (phosphoserine; by CK2). A compositionally biased stretch (basic and acidic residues) spans 254–283; that stretch reads MESHSPRPNGEHVSMEVRDRESLNGERLEK. Phosphoserine; by CDC2 is present on Ser258. Positions 262–425 are binding to basic helix-loop-helix domain; it reads NGEHVSMEVR…LQPVPFPPDA (164 aa). Ser267 is subject to Phosphoserine. 3 stretches are compositionally biased toward low complexity: residues 296–308, 322–345, and 353–362; these read SRSG…STPS, AKAR…QMMP, and YPGAPYQRPA. 2 positions are modified to phosphothreonine: Thr326 and Thr328. A compositionally biased stretch (pro residues) spans 366–382; sequence QRPPSDPAYGRPPPMPY. WD repeat units follow at residues 442 to 480, 488 to 527, 532 to 571, 574 to 613, 615 to 654, 656 to 695, and 697 to 730; these read SHGE…NKNP, QRDN…PRIK, SAAP…LVRQ, GHTD…QLQQ, DFSS…KYQL, LHES…SIFQ, and KETS…EVIY.

Belongs to the WD repeat Groucho/TLE family. In terms of assembly, forms a complex with the hairy/Enhancer of split/deadpan family of basic helix-loop-helix proteins in order to repress transcription. Its activity in regulating transcription depends on other proteins as it lacks a DNA-binding motif. Interacts with hairy/hry (via WRPW motif). Ubiquitinated by XIAP/BIRC4. Ubiquitinated by hyd in response to Wnt signaling, leading to degradation by the proteasome.

It localises to the nucleus. Functionally, transcriptional corepressor that regulates transcription when recruited to specific target DNA by hairy-related bHLH proteins. Maternally required for neurogenesis; in the segregation of the neuroectoderm. Directly or indirectly interacts with Notch and Delta. The polypeptide is Protein groucho (gro) (Drosophila melanogaster (Fruit fly)).